We begin with the raw amino-acid sequence, 265 residues long: MKSVLGFKKAKVTQEKISMVTCYDYTLAKIINSTDIDCILVGDSGGMVLLGKKNTTYTTLDDMQFMTQAVANGATDKFIVADLPFMSYRQSLETTMQAVMALIQSGAHAIKLEGSSGNLDIIKHIVDSGVPVMGHIGMTPQFINSFGGFKVQGRTEEAAKHLLEEAKLLEQAGCFGIVLECIPANIAKDITQNLDIPTIGIGAGSNTDGQILVLQDMLGMNTDFQPKFVKKYIDGSKLFSDAINTYVKETKANTFPTKEHCYDYC.

2 residues coordinate Mg(2+): D43 and D82. 3-methyl-2-oxobutanoate is bound by residues 43–44 (DS), D82, and K111. Position 113 (E113) interacts with Mg(2+). E180 (proton acceptor) is an active-site residue.

This sequence belongs to the PanB family. In terms of assembly, homodecamer; pentamer of dimers. The cofactor is Mg(2+).

The protein localises to the cytoplasm. The enzyme catalyses 3-methyl-2-oxobutanoate + (6R)-5,10-methylene-5,6,7,8-tetrahydrofolate + H2O = 2-dehydropantoate + (6S)-5,6,7,8-tetrahydrofolate. It functions in the pathway cofactor biosynthesis; (R)-pantothenate biosynthesis; (R)-pantoate from 3-methyl-2-oxobutanoate: step 1/2. Functionally, catalyzes the reversible reaction in which hydroxymethyl group from 5,10-methylenetetrahydrofolate is transferred onto alpha-ketoisovalerate to form ketopantoate. The chain is 3-methyl-2-oxobutanoate hydroxymethyltransferase from Francisella tularensis subsp. mediasiatica (strain FSC147).